We begin with the raw amino-acid sequence, 213 residues long: Probable septum site-determining protein MinC (213 aa).

This sequence belongs to the MinC family. In terms of assembly, interacts with MinD and FtsZ.

Its function is as follows. Cell division inhibitor that blocks the formation of polar Z ring septums. Rapidly oscillates between the poles of the cell to destabilize FtsZ filaments that have formed before they mature into polar Z rings. Prevents FtsZ polymerization. This is Probable septum site-determining protein MinC from Pseudothermotoga lettingae (strain ATCC BAA-301 / DSM 14385 / NBRC 107922 / TMO) (Thermotoga lettingae).